Consider the following 391-residue polypeptide: Probable methanogen homoaconitase large subunit (391 aa).

Residues Cys-275, Cys-333, and Cys-336 each contribute to the [4Fe-4S] cluster site.

Belongs to the aconitase/IPM isomerase family. LeuC type 2 subfamily. In terms of assembly, heterotetramer of 2 HacA and 2 HacB proteins.

It carries out the reaction (2R)-homocitrate = (2R,3S)-homoisocitrate. The catalysed reaction is (2R)-homocitrate = cis-homoaconitate + H2O. The enzyme catalyses (2R,3S)-homoisocitrate = cis-homoaconitate + H2O. It catalyses the reaction cis-(homo)2aconitate + H2O = (2R,3S)-iso(homo)2citrate. It carries out the reaction cis-(homo)3aconitate + H2O = (2R,3S)-iso(homo)3citrate. Its pathway is organic acid metabolism; 2-oxosuberate biosynthesis. Its function is as follows. Component of a hydro-lyase with broad substrate specificity for cis-unsaturated tricarboxylic acids. Catalyzes both the reversible dehydration of (R)-homocitrate ((R)-2-hydroxybutane-1,2,4-tricarboxylate) to produce cis-homoaconitate ((Z)-but-1-ene-1,2,4-tricarboxylate), and its hydration to homoisocitrate ((1R,2S)-1-hydroxybutane-1,2,4-tricarboxylate). Is also able to hydrate the analogous longer chain substrates cis-homo(2)-aconitate, cis-homo(3)-aconitate. These reactions are part of the biosynthesis pathway of coenzyme B. The polypeptide is Probable methanogen homoaconitase large subunit (hacA) (Methanosarcina mazei (strain ATCC BAA-159 / DSM 3647 / Goe1 / Go1 / JCM 11833 / OCM 88) (Methanosarcina frisia)).